Here is a 64-residue protein sequence, read N- to C-terminus: U-myrmeciitoxin(01)-Mg4b (64 aa).

The signal sequence occupies residues 1–25; it reads MGKIFFFVLMIAIIGSTFLIEEALG.

The protein belongs to the ant myrmeciitoxin-01 family. In terms of assembly, homodimer; disulfide-linked. Contains 2 intrachain disulfide bonds (per chain) and 1 interchain disulfide bond. In terms of tissue distribution, expressed by the venom gland.

It localises to the secreted. May have antimicrobial properties, like most ant linear peptides. The protein is U-myrmeciitoxin(01)-Mg4b of Myrmecia gulosa (Red bulldog ant).